The chain runs to 92 residues: DNA-directed RNA polymerase subunit Rpo11 (92 aa).

It belongs to the archaeal Rpo11/eukaryotic RPB11/RPC19 RNA polymerase subunit family. As to quaternary structure, part of the 13-subunit RNA polymerase complex.

It localises to the cytoplasm. It carries out the reaction RNA(n) + a ribonucleoside 5'-triphosphate = RNA(n+1) + diphosphate. In terms of biological role, DNA-dependent RNA polymerase (RNAP) catalyzes the transcription of DNA into RNA using the four ribonucleoside triphosphates as substrates. The sequence is that of DNA-directed RNA polymerase subunit Rpo11 from Saccharolobus shibatae (strain ATCC 51178 / DSM 5389 / JCM 8931 / NBRC 15437 / B12) (Sulfolobus shibatae).